A 725-amino-acid chain; its full sequence is Glyoxysomal fatty acid beta-oxidation multifunctional protein MFP-a (725 aa).

The protein in the N-terminal section; belongs to the enoyl-CoA hydratase/isomerase family. It in the central section; belongs to the 3-hydroxyacyl-CoA dehydrogenase family.

Its subcellular location is the glyoxysome. It catalyses the reaction a (3S)-3-hydroxyacyl-CoA = a (2E)-enoyl-CoA + H2O. The enzyme catalyses a 4-saturated-(3S)-3-hydroxyacyl-CoA = a (3E)-enoyl-CoA + H2O. It carries out the reaction a (3Z)-enoyl-CoA = a 4-saturated (2E)-enoyl-CoA. The catalysed reaction is a (3E)-enoyl-CoA = a 4-saturated (2E)-enoyl-CoA. It catalyses the reaction (3S)-3-hydroxybutanoyl-CoA = (3R)-3-hydroxybutanoyl-CoA. The enzyme catalyses a (3S)-3-hydroxyacyl-CoA + NAD(+) = a 3-oxoacyl-CoA + NADH + H(+). It functions in the pathway lipid metabolism; fatty acid beta-oxidation. This is Glyoxysomal fatty acid beta-oxidation multifunctional protein MFP-a from Cucumis sativus (Cucumber).